We begin with the raw amino-acid sequence, 815 residues long: Leucine--tRNA ligase (815 aa).

The 'HIGH' region motif lies at 42-52 (PYPSGRLHMGH). The short motif at 574–578 (KMSKS) is the 'KMSKS' region element. Lysine 577 provides a ligand contact to ATP.

Belongs to the class-I aminoacyl-tRNA synthetase family.

It is found in the cytoplasm. It catalyses the reaction tRNA(Leu) + L-leucine + ATP = L-leucyl-tRNA(Leu) + AMP + diphosphate. This Marinomonas sp. (strain MWYL1) protein is Leucine--tRNA ligase.